The sequence spans 95 residues: Aspartyl/glutamyl-tRNA(Asn/Gln) amidotransferase subunit C (95 aa).

It belongs to the GatC family. As to quaternary structure, heterotrimer of A, B and C subunits.

The catalysed reaction is L-glutamyl-tRNA(Gln) + L-glutamine + ATP + H2O = L-glutaminyl-tRNA(Gln) + L-glutamate + ADP + phosphate + H(+). It carries out the reaction L-aspartyl-tRNA(Asn) + L-glutamine + ATP + H2O = L-asparaginyl-tRNA(Asn) + L-glutamate + ADP + phosphate + 2 H(+). Allows the formation of correctly charged Asn-tRNA(Asn) or Gln-tRNA(Gln) through the transamidation of misacylated Asp-tRNA(Asn) or Glu-tRNA(Gln) in organisms which lack either or both of asparaginyl-tRNA or glutaminyl-tRNA synthetases. The reaction takes place in the presence of glutamine and ATP through an activated phospho-Asp-tRNA(Asn) or phospho-Glu-tRNA(Gln). This is Aspartyl/glutamyl-tRNA(Asn/Gln) amidotransferase subunit C from Chlorobium luteolum (strain DSM 273 / BCRC 81028 / 2530) (Pelodictyon luteolum).